Here is a 306-residue protein sequence, read N- to C-terminus: Dirigent protein 24 (306 aa).

The N-terminal stretch at 1–21 (MAKALSLTIFLFLLIASNVQS) is a signal peptide. Residues 36–61 (PQVPEEEDDSPQAVTTTPTPIPLPGP) are disordered.

Belongs to the plant dirigent protein family. As to quaternary structure, homodimer.

The protein localises to the secreted. Its subcellular location is the extracellular space. It localises to the apoplast. In terms of biological role, dirigent proteins impart stereoselectivity on the phenoxy radical-coupling reaction, yielding optically active lignans from two molecules of coniferyl alcohol in the biosynthesis of lignans, flavonolignans, and alkaloids and thus plays a central role in plant secondary metabolism. This Arabidopsis thaliana (Mouse-ear cress) protein is Dirigent protein 24 (DIR24).